The following is an 82-amino-acid chain: DNA-directed RNA polymerase subunit Rpo5 (82 aa).

Belongs to the archaeal Rpo5/eukaryotic RPB5 RNA polymerase subunit family. In terms of assembly, part of the RNA polymerase complex.

It is found in the cytoplasm. The enzyme catalyses RNA(n) + a ribonucleoside 5'-triphosphate = RNA(n+1) + diphosphate. Functionally, DNA-dependent RNA polymerase (RNAP) catalyzes the transcription of DNA into RNA using the four ribonucleoside triphosphates as substrates. The chain is DNA-directed RNA polymerase subunit Rpo5 from Pyrococcus abyssi (strain GE5 / Orsay).